Reading from the N-terminus, the 137-residue chain is Small ribosomal subunit protein uS11 (137 aa).

Disordered regions lie at residues 1 to 31 (MPPK…AAHI) and 117 to 137 (TISD…RRRV). A compositionally biased stretch (basic residues) spans 12 to 21 (KTQKARRRDK).

This sequence belongs to the universal ribosomal protein uS11 family. Part of the 30S ribosomal subunit. Interacts with proteins S7 and S18. Binds to IF-3.

Its function is as follows. Located on the platform of the 30S subunit, it bridges several disparate RNA helices of the 16S rRNA. Forms part of the Shine-Dalgarno cleft in the 70S ribosome. The chain is Small ribosomal subunit protein uS11 from Rhodococcus jostii (strain RHA1).